The following is a 184-amino-acid chain: Ribosome-recycling factor (184 aa).

The protein belongs to the RRF family.

Its subcellular location is the cytoplasm. Responsible for the release of ribosomes from messenger RNA at the termination of protein biosynthesis. May increase the efficiency of translation by recycling ribosomes from one round of translation to another. The chain is Ribosome-recycling factor from Agathobacter rectalis (strain ATCC 33656 / DSM 3377 / JCM 17463 / KCTC 5835 / VPI 0990) (Eubacterium rectale).